A 360-amino-acid chain; its full sequence is Phospho-N-acetylmuramoyl-pentapeptide-transferase (360 aa).

The next 10 membrane-spanning stretches (helical) occupy residues 26 to 46, 73 to 93, 94 to 114, 132 to 152, 168 to 188, 199 to 219, 239 to 259, 263 to 283, 288 to 308, and 338 to 358; these read AVLSLLTALLLSLWIGPKMIL, TMGGIMILATITASSLLWGDL, SNPYIWCSLFVLLGYGAIGFV, WKYFWLSVVAFIAVFTMYMIG, IMPQLGLFYIVLAYFVIVGTS, GLAIMPTVFVAGAFAIIAWAT, LVIFCTAIVGAGLGFLWFNTY, VFMGDVGSLALGGALGVIAVL, FLLVIMGGVFVMETVSVILQV, and VIIRFWIISLMLVLLGLVTLK.

This sequence belongs to the glycosyltransferase 4 family. MraY subfamily. The cofactor is Mg(2+).

It localises to the cell inner membrane. The catalysed reaction is UDP-N-acetyl-alpha-D-muramoyl-L-alanyl-gamma-D-glutamyl-meso-2,6-diaminopimeloyl-D-alanyl-D-alanine + di-trans,octa-cis-undecaprenyl phosphate = di-trans,octa-cis-undecaprenyl diphospho-N-acetyl-alpha-D-muramoyl-L-alanyl-D-glutamyl-meso-2,6-diaminopimeloyl-D-alanyl-D-alanine + UMP. Its pathway is cell wall biogenesis; peptidoglycan biosynthesis. Functionally, catalyzes the initial step of the lipid cycle reactions in the biosynthesis of the cell wall peptidoglycan: transfers peptidoglycan precursor phospho-MurNAc-pentapeptide from UDP-MurNAc-pentapeptide onto the lipid carrier undecaprenyl phosphate, yielding undecaprenyl-pyrophosphoryl-MurNAc-pentapeptide, known as lipid I. This chain is Phospho-N-acetylmuramoyl-pentapeptide-transferase, found in Actinobacillus succinogenes (strain ATCC 55618 / DSM 22257 / CCUG 43843 / 130Z).